A 184-amino-acid polypeptide reads, in one-letter code: UPF0301 protein RHOS4_26140 (184 aa).

Belongs to the UPF0301 (AlgH) family.

The chain is UPF0301 protein RHOS4_26140 from Cereibacter sphaeroides (strain ATCC 17023 / DSM 158 / JCM 6121 / CCUG 31486 / LMG 2827 / NBRC 12203 / NCIMB 8253 / ATH 2.4.1.) (Rhodobacter sphaeroides).